A 300-amino-acid chain; its full sequence is Protein ARMCX6 (300 aa).

The Mitochondrial intermembrane segment spans residues 1 to 6; it reads MGRARE. 2 mitochondrion outer membrane (MOM)-targeting sequence regions span residues 1–6 and 26–36; these read MGRARE and KLTIGRDDSEK. The helical; Signal-anchor transmembrane segment at 7–27 threads the bilayer; sequence VGWMAAGLMIGAGACYCVYKL. Residues 28–300 are Cytoplasmic-facing; that stretch reads TIGRDDSEKL…REILLETPAP (273 aa). Disordered stretches follow at residues 35-54 and 69-99; these read EKLE…LDEE and WTED…RAHP.

It belongs to the eutherian X-chromosome-specific Armcx family.

Its subcellular location is the mitochondrion. It is found in the mitochondrion outer membrane. May regulate the dynamics and distribution of mitochondria in neural cells. This is Protein ARMCX6 (ARMCX6) from Homo sapiens (Human).